Here is a 72-residue protein sequence, read N- to C-terminus: MLPLYPDISPEIIAIAIGSGAIGCTIVTDSLFWLVKQYCGATLNETFKYYTTATFIASVVALAGTFLLSFII.

The chain is Putative D-serine transporter DsdX-like protein (dsdX) from Escherichia coli O157:H7.